The primary structure comprises 261 residues: Succinate dehydrogenase iron-sulfur subunit (261 aa).

The 2Fe-2S ferredoxin-type domain maps to 28–119 (RKVKVYRYDP…DIKIYPLPHM (92 aa)). 3 residues coordinate [2Fe-2S] cluster: Cys-80, Cys-85, and Cys-100. The 4Fe-4S ferredoxin-type domain maps to 161–191 (DREKLDGLYECILCACCSTSCPSYWWNGDKY). [4Fe-4S] cluster-binding residues include Cys-171, Cys-174, and Cys-177. Position 181 (Cys-181) interacts with [3Fe-4S] cluster. Trp-186 is an a ubiquinone binding site. The [3Fe-4S] cluster site is built by Cys-228 and Cys-234. A [4Fe-4S] cluster-binding site is contributed by Cys-238.

The protein belongs to the succinate dehydrogenase/fumarate reductase iron-sulfur protein family. Part of an enzyme complex containing four subunits: a flavoprotein, an iron-sulfur, cytochrome b-556, and a hydrophobic anchor protein. [2Fe-2S] cluster is required as a cofactor. Requires [3Fe-4S] cluster as cofactor. It depends on [4Fe-4S] cluster as a cofactor.

It carries out the reaction a quinone + succinate = fumarate + a quinol. It participates in carbohydrate metabolism; tricarboxylic acid cycle; fumarate from succinate (bacterial route): step 1/1. The protein is Succinate dehydrogenase iron-sulfur subunit (sdhB) of Rickettsia prowazekii (strain Madrid E).